A 226-amino-acid polypeptide reads, in one-letter code: PKHD-type hydroxylase Sfri_0612 (226 aa).

The Fe2OG dioxygenase domain maps to 77–177 (KIFPPCFNRY…RIAAITWMQS (101 aa)). Histidine 95, aspartate 97, and histidine 158 together coordinate Fe cation. A 2-oxoglutarate-binding site is contributed by arginine 168.

Requires Fe(2+) as cofactor. L-ascorbate serves as cofactor.

The sequence is that of PKHD-type hydroxylase Sfri_0612 from Shewanella frigidimarina (strain NCIMB 400).